The primary structure comprises 226 residues: ATP synthase F(0) complex subunit a (226 aa).

A run of 6 helical transmembrane segments spans residues 12 to 32 (PTVL…LLIP), 68 to 88 (WSLM…LGLL), 97 to 117 (QLSM…AMGL), 138 to 158 (IPML…ALAV), 182 to 202 (LAIN…LTIL), and 203 to 223 (ETAI…LYLH).

This sequence belongs to the ATPase A chain family. As to quaternary structure, component of the ATP synthase complex composed at least of ATP5F1A/subunit alpha, ATP5F1B/subunit beta, ATP5MC1/subunit c (homooctomer), MT-ATP6/subunit a, MT-ATP8/subunit 8, ATP5ME/subunit e, ATP5MF/subunit f, ATP5MG/subunit g, ATP5MK/subunit k, ATP5MJ/subunit j, ATP5F1C/subunit gamma, ATP5F1D/subunit delta, ATP5F1E/subunit epsilon, ATP5PF/subunit F6, ATP5PB/subunit b, ATP5PD/subunit d, ATP5PO/subunit OSCP. ATP synthase complex consists of a soluble F(1) head domain (subunits alpha(3) and beta(3)) - the catalytic core - and a membrane F(0) domain - the membrane proton channel (subunits c, a, 8, e, f, g, k and j). These two domains are linked by a central stalk (subunits gamma, delta, and epsilon) rotating inside the F1 region and a stationary peripheral stalk (subunits F6, b, d, and OSCP). Interacts with DNAJC30; interaction is direct.

It localises to the mitochondrion inner membrane. It catalyses the reaction H(+)(in) = H(+)(out). Its function is as follows. Subunit a, of the mitochondrial membrane ATP synthase complex (F(1)F(0) ATP synthase or Complex V) that produces ATP from ADP in the presence of a proton gradient across the membrane which is generated by electron transport complexes of the respiratory chain. ATP synthase complex consist of a soluble F(1) head domain - the catalytic core - and a membrane F(1) domain - the membrane proton channel. These two domains are linked by a central stalk rotating inside the F(1) region and a stationary peripheral stalk. During catalysis, ATP synthesis in the catalytic domain of F(1) is coupled via a rotary mechanism of the central stalk subunits to proton translocation. With the subunit c (ATP5MC1), forms the proton-conducting channel in the F(0) domain, that contains two crucial half-channels (inlet and outlet) that facilitate proton movement from the mitochondrial intermembrane space (IMS) into the matrix. Protons are taken up via the inlet half-channel and released through the outlet half-channel, following a Grotthuss mechanism. This chain is ATP synthase F(0) complex subunit a, found in Pongo abelii (Sumatran orangutan).